A 630-amino-acid chain; its full sequence is Sodium-dependent serotonin transporter (630 aa).

Polar residues-rich tracts occupy residues 1-11 (METTPLNSQKV) and 42-55 (QISNGYSAVPSTSA). A disordered region spans residues 1–63 (METTPLNSQK…SAGDEAPHST (63 aa)). Over 1–87 (METTPLNSQK…ERETWGKKMD (87 aa)) the chain is Cytoplasmic. Tyr-47 carries the phosphotyrosine modification. The chain crosses the membrane as a helical span at residues 88–112 (FLLSVIGYAVDLGNIWRFPYICYQN). Na(+) is bound by residues Gly-94, Ala-96, Val-97, Asp-98, and Asn-101. Residue Asp-98 participates in serotonin binding. Residues 113 to 115 (GGG) lie on the Extracellular side of the membrane. Residues 116–135 (AFLLPYTIMAIFGGIPLFYM) form a helical membrane-spanning segment. Residues 136–160 (ELALGQYHRNGCISIWKKICPIFKG) are Cytoplasmic-facing. A Phosphotyrosine modification is found at Tyr-142. A helical transmembrane segment spans residues 161 to 186 (IGYAICIIAFYIASYYNTIIAWALYY). The Extracellular portion of the chain corresponds to 187 to 252 (LISSFTDQLP…KGLQDLGTIS (66 aa)). A disulfide bridge links Cys-200 with Cys-209. 2 N-linked (GlcNAc...) asparagine glycosylation sites follow: Asn-208 and Asn-217. A helical membrane pass occupies residues 253–271 (WQLALCIMLIFTIIYFSIW). The Cytoplasmic segment spans residues 272–277 (KGVKTS). Thr-276 carries the phosphothreonine modification. A helical membrane pass occupies residues 278 to 297 (GKVVWVTATFPYIVLSVLLV). At 298–324 (RGATLPGAWRGVVFYLKPNWQKLLETG) the chain is on the extracellular side. Residues 325 to 347 (VWVDAAAQIFFSLGPGFGVLLAF) form a helical membrane-spanning segment. Ser-336 contacts Na(+). The Cytoplasmic segment spans residues 348–360 (ASYNKFNNNCYQD). The helical transmembrane segment at 361-380 (ALVTSVVNCMTSFVSGFVIF) threads the bilayer. Asn-368 serves as a coordination point for Na(+). Over 381-421 (TVLGYMAEMRNEDVSEVAKDAGPSLLFITYAEAIANMPAST) the chain is Extracellular. The helical transmembrane segment at 422-443 (FFAIIFFLMLITLGLDSTFAGL) threads the bilayer. Residues Leu-434, Asp-437, and Ser-438 each contribute to the Na(+) site. Thr-439 serves as a coordination point for serotonin. Topologically, residues 444-463 (EGVITAVLDEFPHIWAKRRE) are cytoplasmic. The chain crosses the membrane as a helical span at residues 464 to 483 (WFVLIVVITCILGSLLTLTS). Over 484 to 494 (GGAYVVTLLEE) the chain is Extracellular. Residues Glu-494 and Tyr-495 each coordinate serotonin. A helical membrane pass occupies residues 495 to 516 (YATGPAVLTVALIEAVVVSWFY). Over 517–538 (GITQFCSDVKEMLGFSPGWFWR) the chain is Cytoplasmic. Residues 539-558 (ICWVAISPLFLLFIICSFLM) form a helical membrane-spanning segment. Positions 556 and 559 each coordinate serotonin. Residues 559–574 (SPPQLRLFQYNYPHWS) lie on the Extracellular side of the membrane. Residues 575–595 (IILGYCIGTSSVICIPIYIIY) traverse the membrane as a helical segment. Over 596 to 630 (RLISTPGTLKERIIKSITPETPTEIPCGDIRMNAV) the chain is Cytoplasmic. The segment at 616–624 (TPTEIPCGD) is interaction with RAB4A.

It belongs to the sodium:neurotransmitter symporter (SNF) (TC 2.A.22) family. SLC6A4 subfamily. In terms of assembly, monomer or homooligomer. Interacts (via C-terminus) with SCAMP2; the interaction is direct and retains transporter molecules intracellularly. Interacts with filamentous actin and STX1A. Interacts (via the N-terminus) with STX1A (via the H3 domain); this interaction regulates SLC4A6 channel conductance. Interacts with SEC23A, SEC24C and PATJ. Interacts with NOS1; the interaction may diminish the cell surface localization of SERT in the brain and, correspondingly, reduce serotonin reuptake. Interacts with TGFB1I1. Interacts with ITGAV:ITGB3. Interacts (via C-terminus) with ITGB3; this interaction regulates SLC6A4 trafficking. Phosphorylation at Thr-276 increases 5-HT uptake and is required for cGMP-mediated SERT regulation. In terms of tissue distribution, expressed in the lung, midbrain and brainstem regions. Expressed in brainstem raphe neurons.

The protein resides in the cell membrane. Its subcellular location is the endomembrane system. It localises to the endosome membrane. The protein localises to the synapse. It is found in the cell junction. The protein resides in the focal adhesion. Its subcellular location is the cell projection. It localises to the neuron projection. The enzyme catalyses serotonin(out) + K(+)(in) + Na(+)(out) + H(+)(in) = serotonin(in) + K(+)(out) + Na(+)(in) + H(+)(out). Serotonin transporter that cotransports serotonin with one Na(+) ion in exchange for one K(+) ion and possibly one proton in an overall electroneutral transport cycle. Transports serotonin across the plasma membrane from the extracellular compartment to the cytosol thus limiting serotonin intercellular signaling. Essential for serotonin homeostasis in the central nervous system. In the developing somatosensory cortex, acts in glutamatergic neurons to control serotonin uptake and its trophic functions accounting for proper spatial organization of cortical neurons and elaboration of sensory circuits. In the mature cortex, acts primarily in brainstem raphe neurons to mediate serotonin uptake from the synaptic cleft back into the pre-synaptic terminal thus terminating serotonin signaling at the synapse. Modulates mucosal serotonin levels in the gastrointestinal tract through uptake and clearance of serotonin in enterocytes. Required for enteric neurogenesis and gastrointestinal reflexes. Regulates blood serotonin levels by ensuring rapid high affinity uptake of serotonin from plasma to platelets, where it is further stored in dense granules via vesicular monoamine transporters and then released upon stimulation. Mechanistically, the transport cycle starts with an outward-open conformation having Na1(+) and Cl(-) sites occupied. The binding of a second extracellular Na2(+) ion and serotonin substrate leads to structural changes to outward-occluded to inward-occluded to inward-open, where the Na2(+) ion and serotonin are released into the cytosol. Binding of intracellular K(+) ion induces conformational transitions to inward-occluded to outward-open and completes the cycle by releasing K(+) possibly together with a proton bound to Asp-98 into the extracellular compartment. Na1(+) and Cl(-) ions remain bound throughout the transport cycle. Additionally, displays serotonin-induced channel-like conductance for monovalent cations, mainly Na(+) ions. The channel activity is uncoupled from the transport cycle and may contribute to the membrane resting potential or excitability. The protein is Sodium-dependent serotonin transporter of Mus musculus (Mouse).